We begin with the raw amino-acid sequence, 317 residues long: MANRDVERVGKKNRGANNNYFYEESSGETHWTSWLIPAIVVANLAVFIAVMFVNDCPKKITGPNKECVARFLGRFSFQPLKENPLFGPSSSTLEKMGALEWRKVVHEHQGWRLLSCMWLHAGIIHLLTNMLSLIFIGIRLEQQFGFIRVGLIYLISGLGGSILSSLFLQESISVGASGALFGLLGAMLSELLTNWTIYANKAAALITLLFIIAINLALGMLPRVDNFAHIGGFLTGFCLGFVLLVRPQYGWEASRTNTSRTKRKYSMYQYVLFVVSVVLLVVGLTVALVMLFKGENGNKHCKWCHYLSCFPTSKWTC.

Helical transmembrane passes span 33–53 (SWLIPAIVVANLAVFIAVMFV), 118–138 (WLHAGIIHLLTNMLSLIFIGI), 149–169 (VGLIYLISGLGGSILSSLFLQ), 172–192 (ISVGASGALFGLLGAMLSELL), 202–222 (AAALITLLFIIAINLALGMLP), 224–244 (VDNFAHIGGFLTGFCLGFVLL), and 272–292 (LFVVSVVLLVVGLTVALVMLF). Serine 177 serves as the catalytic Nucleophile. The active-site Charge relay system is the histidine 229.

This sequence belongs to the peptidase S54 family. As to expression, expressed in roots, seedlings, leaves, stems and flowers.

The protein localises to the golgi apparatus membrane. The catalysed reaction is Cleaves type-1 transmembrane domains using a catalytic dyad composed of serine and histidine that are contributed by different transmembrane domains.. Rhomboid-type serine protease that catalyzes intramembrane proteolysis. Can cleave the Drosophila proteins Spitz and Keren. May function in pollen elongation. The polypeptide is RHOMBOID-like protein 2 (Arabidopsis thaliana (Mouse-ear cress)).